The primary structure comprises 264 residues: H-2 class II histocompatibility antigen, I-E beta chain (264 aa).

The N-terminal stretch at 1-31 (MVWLPRVPCVAAVILLLTVLSPPVALVRNSR) is a signal peptide. Residues 32–121 (PRFLEYSTSE…IFDNFLVPRR (90 aa)) form a beta-1 region. The Extracellular portion of the chain corresponds to 32 to 225 (PRFLEYSTSE…KAQSTSAQNK (194 aa)). 2 disulfide bridges follow: C42/C106 and C144/C200. An N-linked (GlcNAc...) asparagine glycan is attached at N46. The tract at residues 122–215 (VEPTVTVYPT…SLTDPVTVEW (94 aa)) is beta-2. One can recognise an Ig-like C1-type domain in the interval 124–214 (PTVTVYPTKT…PSLTDPVTVE (91 aa)). Residues 216-225 (KAQSTSAQNK) form a connecting peptide region. Residues 226-248 (MLSGVGGFVLGLLFLGAGLFIYF) form a helical membrane-spanning segment. Topologically, residues 249 to 264 (RNQKGQSGLQPTGLLS) are cytoplasmic.

The protein belongs to the MHC class II family. Post-translationally, ubiquitinated in immature dendritic cells leading to down-regulation of MHC class II.

The protein localises to the membrane. In Mus musculus (Mouse), this protein is H-2 class II histocompatibility antigen, I-E beta chain (H2-Eb1).